The chain runs to 182 residues: Early upstream open reading frame (182 aa).

The protein belongs to the EUO family.

The protein is Early upstream open reading frame of Chlamydophila psittaci (strain ATCC VR-125 / 6BC) (Chlamydia psittaci).